The following is a 457-amino-acid chain: Sensor protein CpxA (457 aa).

At M1 to A7 the chain is on the cytoplasmic side. The helical transmembrane segment at R8 to K29 threads the bilayer. Residues L30–R163 are Periplasmic-facing. Residues P164–W184 form a helical membrane-spanning segment. The region spanning S185–T237 is the HAMP domain. Residues S185–S457 are Cytoplasmic-facing. The Histidine kinase domain occupies D245–K455. Residue H248 is modified to Phosphohistidine; by autocatalysis.

It is found in the cell inner membrane. It carries out the reaction ATP + protein L-histidine = ADP + protein N-phospho-L-histidine.. Functionally, this protein is involved in several diverse cellular processes, such as the functioning of acetohydroxyacid synthetase I, in the biosynthesis of isoleucine and valine, the TraJ protein activation activity for tra gene expression in F plasmid, and the synthesis, translocation, or stability of cell envelope proteins. Activates CpxR by phosphorylation. This chain is Sensor protein CpxA (cpxA), found in Escherichia coli O157:H7.